A 67-amino-acid chain; its full sequence is Large ribosomal subunit protein bL32c (67 aa).

The protein belongs to the bacterial ribosomal protein bL32 family.

It is found in the plastid. Its subcellular location is the chloroplast. This is Large ribosomal subunit protein bL32c from Chara vulgaris (Common stonewort).